Consider the following 789-residue polypeptide: Phenylalanine--tRNA ligase beta subunit (789 aa).

A tRNA-binding domain is found at 38 to 151 (KKHLQSFVVV…NTYNVGESFF (114 aa)). The B5 domain maps to 398–474 (HNDILLNFSP…RLYGYDKILE (77 aa)). Mg(2+) is bound by residues aspartate 452, aspartate 458, glutamate 461, and glutamate 462. The 94-residue stretch at 694-787 (LRYQSVKRDF…ISKGFNGILR (94 aa)) folds into the FDX-ACB domain.

It belongs to the phenylalanyl-tRNA synthetase beta subunit family. Type 1 subfamily. As to quaternary structure, tetramer of two alpha and two beta subunits. The cofactor is Mg(2+).

The protein localises to the cytoplasm. The catalysed reaction is tRNA(Phe) + L-phenylalanine + ATP = L-phenylalanyl-tRNA(Phe) + AMP + diphosphate + H(+). The polypeptide is Phenylalanine--tRNA ligase beta subunit (Ehrlichia ruminantium (strain Gardel)).